Reading from the N-terminus, the 433-residue chain is Probable non-inhibitory serpin-Z5 (433 aa).

Positions Met-1 to Thr-12 are enriched in basic and acidic residues. The disordered stretch occupies residues Met-1 to Ser-43. Residues Thr-23–Arg-36 are compositionally biased toward basic residues. The segment at Gly-380–Phe-404 is RCL.

It belongs to the serpin family. Weakly expressed during seedling development.

The sequence is that of Probable non-inhibitory serpin-Z5 from Arabidopsis thaliana (Mouse-ear cress).